We begin with the raw amino-acid sequence, 341 residues long: Paired box protein Pax-9 (341 aa).

Residues 4–130 (AFGEVNQLGG…SSISRILRNK (127 aa)) constitute a DNA-binding region (paired). The PAI subdomain stretch occupies residues 7-63 (EVNQLGGVFVNGRPLPNAIRLRIVELAQLGIRPCDISRQLRVSHGCVSKILARYNET). Residues 82–130 (TVVKHIRTYKQRDPGIFAWEIRDRLLADGVCDKYNVPSVSSISRILRNK) are RED subdomain. An interaction with KDM5B region spans residues 168–189 (AAAAKVPTPPGVPAIPGSVAMP).

As to quaternary structure, interacts with KDM5B.

The protein resides in the nucleus. Transcription factor required for normal development of thymus, parathyroid glands, ultimobranchial bodies, teeth, skeletal elements of skull and larynx as well as distal limbs. The protein is Paired box protein Pax-9 (PAX9) of Propithecus coquereli (Coquerel's sifaka).